Here is a 100-residue protein sequence, read N- to C-terminus: Nucleoid-associated protein ckrop_0143 (100 aa).

It belongs to the YbaB/EbfC family. Homodimer.

The protein resides in the cytoplasm. The protein localises to the nucleoid. Binds to DNA and alters its conformation. May be involved in regulation of gene expression, nucleoid organization and DNA protection. This is Nucleoid-associated protein ckrop_0143 from Corynebacterium kroppenstedtii (strain DSM 44385 / JCM 11950 / CIP 105744 / CCUG 35717).